A 232-amino-acid polypeptide reads, in one-letter code: GFP-like non-fluorescent chromoprotein FP595 (232 aa).

The segment at residues 63-65 (MYG) is a cross-link (2-iminomethyl-5-imidazolinone (Met-Gly)). Tyrosine 64 is subject to (E)-2,3-didehydrotyrosine.

Belongs to the GFP family. Contains a chromophore consisting of modified amino acid residues. The chromophore is formed by autocatalytic backbone condensation between Xaa-N and Gly-(N+2), oxidation of Tyr-(N+1) to didehydrotyrosine, and formation of a double bond to the alpha-amino nitrogen of residue Tyr-(N+1). Maturation of the chromophore requires nothing other than molecular oxygen. Tentacle tips.

In terms of biological role, pigment protein that is intensely purple in color. The chain is GFP-like non-fluorescent chromoprotein FP595 from Anemonia sulcata (Mediterranean snakelocks sea anemone).